A 754-amino-acid chain; its full sequence is Leucine-rich repeat-containing protein 36 (754 aa).

2 LRR repeats span residues 51–72 (NLRSLDLSRNLITSLKGIQYLC) and 73–94 (SLQDLNLYYNNIPSLVEVSRLQ). The LRRCT domain maps to 107-146 (NPVVRKDTDYRLFAVYTLQTLEKLDDRTVREGERKAAKLH). Residues 241–255 (REMPSDNHQEDEFRH) show a composition bias toward basic and acidic residues. The disordered stretch occupies residues 241–270 (REMPSDNHQEDEFRHYSPRQSTVRSPEKMT). Positions 600–680 (NDMESLKQKL…EKTVAILHES (81 aa)) form a coiled coil. Residues 702-734 (YSGKALLPPEKGHHLGRSSPFGKSTLSSSSPVA) form a disordered region. Positions 722-732 (FGKSTLSSSSP) are enriched in polar residues.

This Homo sapiens (Human) protein is Leucine-rich repeat-containing protein 36 (LRRC36).